Consider the following 469-residue polypeptide: MSIFPKISLRPEVENYLKEGFMNKEIVTALGKQEAERKFETLLKHLSHPPSFTTVRVNTHLASVQHVKNLLLDELQKQFNGLSVPILQHPDLQDVLLIPVIGPRKNIKKQQCEAIVGAQCGNAVLRGAHVYAPGIVSASQFMKAGDVISVYSDIKGKCKKGAKEFDGTKVFLGNGISELSRKEIFSGLPELKGMGIRMTEPVYLSPSFDSVLPRYLFLQNLPSALVSHVLNPQPGEKILDLCAAPGGKTTHIAALMHDQGEVIALDKIFNKVEKIKQNALLLGLNSIRAFCFDGTKAVKLDMVEDTEGEPPFLPESFDRILLDAPCSGMGQRPNMACTWSVKEVASYQPLQRKLFTAAVQLLKPEGVLVYSTCTITLAENEEQVAWALTKFPCLQLQPQEPQIGGEGMRGAGLSCEQLKQLQRFDPSAVPLPDTDMDSLREARREDMLRLANKDSIGFFIAKFVKCKST.

In terms of domain architecture, PUA spans 111–203 (QCEAIVGAQC…MGIRMTEPVY (93 aa)). Residues 242-248 (CAAPGGK), aspartate 266, aspartate 293, and aspartate 323 contribute to the S-adenosyl-L-methionine site. Cysteine 373 (nucleophile) is an active-site residue. Residue lysine 419 is modified to N6-acetyllysine.

Belongs to the class I-like SAM-binding methyltransferase superfamily. RsmB/NOP family.

The protein localises to the cytoplasm. The enzyme catalyses cytidine(72) in tRNA(Thr) + S-adenosyl-L-methionine = 5-methylcytidine(72) in tRNA(Thr) + S-adenosyl-L-homocysteine + H(+). It catalyses the reaction cytidine(72) in tRNA(Cys) + S-adenosyl-L-methionine = 5-methylcytidine(72) in tRNA(Cys) + S-adenosyl-L-homocysteine + H(+). S-adenosyl-L-methionine-dependent methyltransferase that specifically methylates the C5 position of cytosine 72 in tRNA(Thr)(TGT) and tRNA(Cys)(GCA). In vitro also methylates tRNA(Thr)(AGT). Methylation requires, in the acceptor stem region, the presence of the 3'-CCA terminus, the target site C72, the discriminator base U73, and the second and third base pairs (2:71 and 3:70) in the tRNA substrates. The polypeptide is tRNA (cytosine(72)-C(5))-methyltransferase NSUN6 (Homo sapiens (Human)).